A 505-amino-acid chain; its full sequence is Lysine--tRNA ligase (505 aa).

Residues E403 and E410 each coordinate Mg(2+).

It belongs to the class-II aminoacyl-tRNA synthetase family. Homodimer. The cofactor is Mg(2+).

The protein resides in the cytoplasm. The enzyme catalyses tRNA(Lys) + L-lysine + ATP = L-lysyl-tRNA(Lys) + AMP + diphosphate. This chain is Lysine--tRNA ligase, found in Methanospirillum hungatei JF-1 (strain ATCC 27890 / DSM 864 / NBRC 100397 / JF-1).